The following is a 367-amino-acid chain: Histidinol-phosphate aminotransferase (367 aa).

The residue at position 227 (lysine 227) is an N6-(pyridoxal phosphate)lysine.

It belongs to the class-II pyridoxal-phosphate-dependent aminotransferase family. Histidinol-phosphate aminotransferase subfamily. Homodimer. The cofactor is pyridoxal 5'-phosphate.

It carries out the reaction L-histidinol phosphate + 2-oxoglutarate = 3-(imidazol-4-yl)-2-oxopropyl phosphate + L-glutamate. It functions in the pathway amino-acid biosynthesis; L-histidine biosynthesis; L-histidine from 5-phospho-alpha-D-ribose 1-diphosphate: step 7/9. The chain is Histidinol-phosphate aminotransferase from Leptospira borgpetersenii serovar Hardjo-bovis (strain JB197).